Reading from the N-terminus, the 357-residue chain is Carbamoyl phosphate synthase small chain (357 aa).

Positions 1–168 are CPSase; it reads MSKRLLILED…STTTAYPSPN (168 aa). 3 residues coordinate L-glutamine: S46, G220, and G222. The region spanning 172 to 357 is the Glutamine amidotransferase type-1 domain; sequence KVVVVDFGLK…FMDLMDNFKK (186 aa). Catalysis depends on C247, which acts as the Nucleophile. L-glutamine-binding residues include L248, Q251, N289, G291, and Y292. Catalysis depends on residues H331 and D333.

Belongs to the CarA family. As to quaternary structure, composed of two chains; the small (or glutamine) chain promotes the hydrolysis of glutamine to ammonia, which is used by the large (or ammonia) chain to synthesize carbamoyl phosphate. Tetramer of heterodimers (alpha,beta)4.

The catalysed reaction is hydrogencarbonate + L-glutamine + 2 ATP + H2O = carbamoyl phosphate + L-glutamate + 2 ADP + phosphate + 2 H(+). It catalyses the reaction L-glutamine + H2O = L-glutamate + NH4(+). It participates in amino-acid biosynthesis; L-arginine biosynthesis; carbamoyl phosphate from bicarbonate: step 1/1. The protein operates within pyrimidine metabolism; UMP biosynthesis via de novo pathway; (S)-dihydroorotate from bicarbonate: step 1/3. Small subunit of the glutamine-dependent carbamoyl phosphate synthetase (CPSase). CPSase catalyzes the formation of carbamoyl phosphate from the ammonia moiety of glutamine, carbonate, and phosphate donated by ATP, constituting the first step of 2 biosynthetic pathways, one leading to arginine and/or urea and the other to pyrimidine nucleotides. The small subunit (glutamine amidotransferase) binds and cleaves glutamine to supply the large subunit with the substrate ammonia. This chain is Carbamoyl phosphate synthase small chain, found in Lactococcus lactis subsp. lactis (strain IL1403) (Streptococcus lactis).